We begin with the raw amino-acid sequence, 92 residues long: MAERLDPDVVLNHVLVPKHEVIDDEEEIEKILEELGVEKDDLPRIHTNDPVVVALSEKLGKRIKPGSLVKIVRDSPTAGKTVVYRVVTNPPE.

The protein belongs to the archaeal Rpo5/eukaryotic RPB5 RNA polymerase subunit family. Part of the RNA polymerase complex.

Its subcellular location is the cytoplasm. The catalysed reaction is RNA(n) + a ribonucleoside 5'-triphosphate = RNA(n+1) + diphosphate. DNA-dependent RNA polymerase (RNAP) catalyzes the transcription of DNA into RNA using the four ribonucleoside triphosphates as substrates. This Methanopyrus kandleri (strain AV19 / DSM 6324 / JCM 9639 / NBRC 100938) protein is DNA-directed RNA polymerase subunit Rpo5.